Reading from the N-terminus, the 673-residue chain is Bifunctional lycopene cyclase/phytoene synthase (673 aa).

The segment at 1–251 (MTALAYYQIH…IVLGLSACDH (251 aa)) is lycopene beta-cyclase. Transmembrane regions (helical) follow at residues 9 to 29 (IHLI…SPIL), 36 to 56 (KISI…SWII), 81 to 101 (YEEY…YVLA), 117 to 137 (SALS…LFTA), 157 to 177 (LSLL…EYAF), 187 to 207 (TIAA…VAVG), and 226 to 246 (VLPI…VLGL). A phytoene synthase region spans residues 258 to 673 (LHGRTIYGNK…SVVMSGWEGQ (416 aa)). Positions 376-399 (KILSSPLLPPSHPSRPTGMYPLPP) are disordered.

The protein in the N-terminal section; belongs to the lycopene beta-cyclase family. This sequence in the C-terminal section; belongs to the phytoene/squalene synthase family.

The protein resides in the membrane. It catalyses the reaction all-trans-lycopene = gamma-carotene. It carries out the reaction gamma-carotene = all-trans-beta-carotene. The catalysed reaction is 2 (2E,6E,10E)-geranylgeranyl diphosphate = 15-cis-phytoene + 2 diphosphate. Its pathway is carotenoid biosynthesis; beta-carotene biosynthesis. The protein operates within carotenoid biosynthesis; phytoene biosynthesis; all-trans-phytoene from geranylgeranyl diphosphate: step 1/1. Functionally, bifunctional enzyme that catalyzes the reactions from geranylgeranyl diphosphate to phytoene (phytoene synthase) and lycopene to beta-carotene via the intermediate gamma-carotene (lycopene cyclase). The cyclase preferentially catalyzes the symmetric cyclization of both ends of the substrate to produce dicyclic carotenoids. Beta-carotene is further processed to the acidic carotenoid astaxanthin. This is Bifunctional lycopene cyclase/phytoene synthase from Phaffia rhodozyma (Yeast).